The sequence spans 1298 residues: Phosphoribosylformylglycinamidine synthase (1298 aa).

Residues 303–327 (FPGAATGSGGEIRDEGATGRGAKPK) form a disordered region. Residues 305-316 (GAATGSGGEIRD), 384-386 (TGY), and alanine 676 contribute to the ATP site. Mg(2+)-binding residues include aspartate 677, glutamate 716, asparagine 720, and aspartate 884. Serine 886 is a binding site for ATP. The 254-residue stretch at 1045-1298 (VAVLREQGVN…MFRNARAWVN (254 aa)) folds into the Glutamine amidotransferase type-1 domain. The active-site Nucleophile is cysteine 1138. Catalysis depends on residues histidine 1263 and glutamate 1265.

The protein in the N-terminal section; belongs to the FGAMS family. In terms of assembly, monomer.

Its subcellular location is the cytoplasm. It catalyses the reaction N(2)-formyl-N(1)-(5-phospho-beta-D-ribosyl)glycinamide + L-glutamine + ATP + H2O = 2-formamido-N(1)-(5-O-phospho-beta-D-ribosyl)acetamidine + L-glutamate + ADP + phosphate + H(+). It participates in purine metabolism; IMP biosynthesis via de novo pathway; 5-amino-1-(5-phospho-D-ribosyl)imidazole from N(2)-formyl-N(1)-(5-phospho-D-ribosyl)glycinamide: step 1/2. Phosphoribosylformylglycinamidine synthase involved in the purines biosynthetic pathway. Catalyzes the ATP-dependent conversion of formylglycinamide ribonucleotide (FGAR) and glutamine to yield formylglycinamidine ribonucleotide (FGAM) and glutamate. In Pseudomonas syringae pv. syringae (strain B728a), this protein is Phosphoribosylformylglycinamidine synthase.